Reading from the N-terminus, the 209-residue chain is Ferritin heavy chain (209 aa).

The signal sequence occupies residues 1-27 (MMKSVFFGVVAITVAILSIYQETAQAQ). A Ferritin-like diiron domain is found at 40–193 (DSVDDQCLAA…EKIATLKKMK (154 aa)). Residues Glu57, Glu92, His95, Glu140, and Gln175 each coordinate Fe cation.

The protein belongs to the ferritin family. Oligomer of 24 subunits. There are two types of subunits: L (light) chain and H (heavy) chain. The functional molecule forms a roughly spherical shell with a diameter of 12 nm and contains a central cavity into which the insoluble mineral iron core is deposited.

It localises to the secreted. Its subcellular location is the cytoplasm. The catalysed reaction is 4 Fe(2+) + O2 + 4 H(+) = 4 Fe(3+) + 2 H2O. Its function is as follows. Stores iron in a soluble, non-toxic, readily available form. Important for iron homeostasis. Has ferroxidase activity. Iron is taken up in the ferrous form and deposited as ferric hydroxides after oxidation. This Aedes aegypti (Yellowfever mosquito) protein is Ferritin heavy chain (FERH).